Consider the following 194-residue polypeptide: Imidazoleglycerol-phosphate dehydratase (194 aa).

Belongs to the imidazoleglycerol-phosphate dehydratase family.

The protein resides in the cytoplasm. It catalyses the reaction D-erythro-1-(imidazol-4-yl)glycerol 3-phosphate = 3-(imidazol-4-yl)-2-oxopropyl phosphate + H2O. Its pathway is amino-acid biosynthesis; L-histidine biosynthesis; L-histidine from 5-phospho-alpha-D-ribose 1-diphosphate: step 6/9. This chain is Imidazoleglycerol-phosphate dehydratase, found in Bacillus pumilus (strain SAFR-032).